The chain runs to 367 residues: UDP-N-acetylglucosamine--N-acetylmuramyl-(pentapeptide) pyrophosphoryl-undecaprenol N-acetylglucosamine transferase (367 aa).

UDP-N-acetyl-alpha-D-glucosamine contacts are provided by residues 15-17, Asn-127, Arg-163, Ser-191, Ile-249, and Gln-294; that span reads TGG.

The protein belongs to the glycosyltransferase 28 family. MurG subfamily.

It localises to the cell inner membrane. It carries out the reaction di-trans,octa-cis-undecaprenyl diphospho-N-acetyl-alpha-D-muramoyl-L-alanyl-D-glutamyl-meso-2,6-diaminopimeloyl-D-alanyl-D-alanine + UDP-N-acetyl-alpha-D-glucosamine = di-trans,octa-cis-undecaprenyl diphospho-[N-acetyl-alpha-D-glucosaminyl-(1-&gt;4)]-N-acetyl-alpha-D-muramoyl-L-alanyl-D-glutamyl-meso-2,6-diaminopimeloyl-D-alanyl-D-alanine + UDP + H(+). It participates in cell wall biogenesis; peptidoglycan biosynthesis. Its function is as follows. Cell wall formation. Catalyzes the transfer of a GlcNAc subunit on undecaprenyl-pyrophosphoryl-MurNAc-pentapeptide (lipid intermediate I) to form undecaprenyl-pyrophosphoryl-MurNAc-(pentapeptide)GlcNAc (lipid intermediate II). This Burkholderia orbicola (strain MC0-3) protein is UDP-N-acetylglucosamine--N-acetylmuramyl-(pentapeptide) pyrophosphoryl-undecaprenol N-acetylglucosamine transferase.